Consider the following 1038-residue polypeptide: GTPase-activating Rap/Ran-GAP domain-like protein 3 (1038 aa).

Residues K6 and S68 each carry the phosphoserine modification. A Rap-GAP domain is found at 214–430; sequence LLVLEEQEGS…RTLDMLIRSL (217 aa). Phosphoserine occurs at positions 449 and 455. Residues 512-824 enclose the CNH domain; the sequence is PHEAVCADPW…QLVASRSDIY (313 aa). 2 disordered regions span residues 833-863 and 937-1038; these read EGSSGGSSKGASAHTSPQTPPARDTPLFPSS and LLGL…IDLK. T851 carries the phosphothreonine modification. Positions 1019–1028 are enriched in polar residues; it reads SGSSPFQLMA.

This sequence belongs to the GARNL3 family.

This chain is GTPase-activating Rap/Ran-GAP domain-like protein 3 (Garnl3), found in Mus musculus (Mouse).